The chain runs to 526 residues: Cell adhesion molecule CEACAM1 (526 aa).

The signal sequence occupies residues 1-34 (MGHLSAPLHRVRVPWQGLLLTASLLTFWNPPTTA). Gln35 carries the pyrrolidone carboxylic acid modification. One can recognise an Ig-like V-type domain in the interval 35-142 (QLTTESMPFN…EATGQFHVYP (108 aa)). Residues 35-428 (QLTTESMPFN…LPQENGLSPG (394 aa)) are Extracellular-facing. A required for homophilic binding region spans residues 39-142 (ESMPFNVAEG…EATGQFHVYP (104 aa)). N-linked (GlcNAc...) asparagine glycans are attached at residues Asn104, Asn111, Asn115, Asn152, Asn182, Asn197, Asn208, Asn224, Asn232, Asn254, Asn274, Asn288, Asn292, Asn302, Asn309, Asn345, Asn351, Asn363, Asn378, and Asn405. Ig-like C2-type domains are found at residues 145–232 (PKPS…VTLN), 237–317 (PDTP…KTII), and 323–413 (PVVA…IMLN). Residues Cys167 and Cys215 are joined by a disulfide bond. Cys259 and Cys299 are joined by a disulfide. Residues Cys348 and Cys396 are joined by a disulfide bond. Residues 429–452 (AIAGIVIGVVALVALIAVALACFL) traverse the membrane as a helical segment. The interval 450 to 462 (CFLHFGKTGRASD) is interaction with calmodulin. An interaction with FLNA region spans residues 452 to 526 (LHFGKTGRAS…EIIYSEVKKQ (75 aa)). Over 453-526 (HFGKTGRASD…EIIYSEVKKQ (74 aa)) the chain is Cytoplasmic. A compositionally biased stretch (basic and acidic residues) spans 461 to 482 (SDQRDLTEHKPSVSNHTQDHSN). The tract at residues 461–513 (SDQRDLTEHKPSVSNHTQDHSNDPPNKMNEVTYSTLNFEAQQPTQPTSASPSL) is disordered. The segment covering 489–513 (NEVTYSTLNFEAQQPTQPTSASPSL) has biased composition (polar residues). Residues 489-526 (NEVTYSTLNFEAQQPTQPTSASPSLTATEIIYSEVKKQ) form a required for interaction with PTPN11 and PTPN6 and for control of phosphorylation level region. Tyr493 carries the post-translational modification Phosphotyrosine; by SRC, LCK, INSR and EGFR. Phosphoserine is present on Ser508. Tyr520 carries the post-translational modification Phosphotyrosine; by INSR, SRC and LCK. The segment at 520 to 523 (YSEV) is essential for interaction with PTPN11 and PTPN6.

The protein belongs to the immunoglobulin superfamily. CEA family. In terms of assembly, monomer. Oligomer. Heterodimer. Homodimer. Cis-dimer/oligomer (via Ig-like C2-type and/or via cytoplasmic domains); induced by trans-homophilic cell adhesion through an allosteric mechanism transmitted by the Ig-like V-type domain, and is regulated by intracellular calcium and calmodulin. Interacts (via cytoplasmic domain) with calmodulin in a calcium dependent manner; reduces homophilic cell adhesion through dissociation of dimer. Isoform 1 interacts (via cytoplasmic domain) with PTPN11 (preferentially) and PTPN6; cis-homodimer form is preferred; this interaction is decreased by formation of Isoform 1 /Isoform 8 cis-heterodimers and is dependent on the monomer/dimer equilibrium; this interaction is phosphorylation-dependent. Isoform 1 interacts with LYN. Isoform 1 interacts (via cytoplasmic domain) with SRC (via SH2 domain); this interaction is regulated by trans-homophilic cell adhesion. Isoform 1 interacts (via cytoplasmic domain) with LCK; mediates phosphorylation at Tyr-493 and Tyr-520 resulting in PTPN6 association. Isoform 1 interacts with PTPN6; this interaction is phosphorylation-dependent and causes a profound decrease in TCR stimulation-induced CD247 and ZAP70 phosphorylation. Isoform 1 interacts with TCR/CD3 complex through TCR beta chain and CD3E; colocalizes at the cell surface and upon stimulation of the TCR/CD3 complex recruits PTPN6 in the TCR/CD3 complex, resulting in dephosphorylation of CD247 and ZAP70. Isoform 1 interacts (via cytoplasmic domain) with SHC1 (via SH2 domain); SHC1 mediates interaction with INSR or EGFR in a Ser-508 phosphorylation-dependent manner. Isoform 1 interacts with EGFR; the interaction is indirect. Isoform 1 interacts with CSF3R; down-regulates the CSF3R-STAT3 pathway through recruitment of PTPN6 that dephosphorylates CSF3R. Isoform 1 (phosphorylated form) interacts with TLR4 and SYK; recruits PTPN6 that dephosphorylates SYK, reducing the production of reactive oxygen species (ROS) and lysosome disruption, leading to a reduction of the inflammasome activity. Isoform 1 interacts with FLNA; inhibits cell migration and cell scattering by interfering with the interaction of FLNA with RALA. Isoform 1 interacts (via cytoplasmic domain) with PXN; the interaction is phosphotyrosyl-dependent. Isoform 1 interacts with KLRK1; recruits PTPN6 that dephosphorylates VAV1. Isoform 1 interacts with CEACAM8. Isoform 1 interacts with FASN; this interaction is insulin and phosphorylation-dependent; reduces fatty-acid synthase activity. Interacts (via Ig-like V-type) with HAVCR2 (via Ig-like V-type); facilitates the maturation and cell surface expression of HAVCR2 thereby regulating T cell tolerance induction. Isoform 8 interacts (via the cytoplasmic domain) with ANXA2; this interaction is regulated by phosphorylation and appears in the AIIt complex. Interacts (via Lewis X moieties) with CD209 (via C-type lectin domain); this interaction is regulated by the glycosylation pattern of CEACAM1 on cell types and regulates contact between dendritic cells and neutrophils. Post-translationally, phosphorylated on serine and tyrosine. Isoform 1 is phosphorylated on tyrosine by Src family kinases like SRC and LCK and by receptor like CSF3R, EGFR and INSR upon stimulation. Phosphorylated at Ser-508; mediates activity. Phosphorylated at Tyr-493; regulates activity. Phosphorylated at Tyr-493 by EGFR and INSR upon stimulation; this phosphorylation is Ser-508-phosphorylation-dependent; mediates cellular internalization; increases interaction with downstream proteins like SHC1 and FASN. Phosphorylated at Tyr-493 and Tyr-520 by LCK; mediates PTPN6 association and is regulated by homophilic ligation of CEACAM1 in the absence of T cell activation. Phosphorylated at Tyr-520; mediates interaction with PTPN11. In terms of processing, phosphorylated on serine and threonine. In terms of tissue distribution, expressed in columnar epithelial cells of the colon (at protein level). The predominant forms expressed by T cells are those containing a long cytoplasmic domain. Expressed in granulocytes and lymphocytes. Leukocytes only express isoforms 6 and isoform 1.

The protein localises to the cell membrane. It localises to the lateral cell membrane. The protein resides in the apical cell membrane. It is found in the basal cell membrane. Its subcellular location is the cell junction. The protein localises to the adherens junction. It localises to the secreted. The protein resides in the cytoplasmic vesicle. It is found in the secretory vesicle membrane. Its subcellular location is the cell projection. The protein localises to the microvillus membrane. Cell adhesion protein that mediates homophilic cell adhesion in a calcium-independent manner. Plays a role as coinhibitory receptor in immune response, insulin action and also functions as an activator during angiogenesis. Its coinhibitory receptor function is phosphorylation- and PTPN6 -dependent, which in turn, suppress signal transduction of associated receptors by dephosphorylation of their downstream effectors. Plays a role in immune response, of T cells, natural killer (NK) and neutrophils. Upon TCR/CD3 complex stimulation, inhibits TCR-mediated cytotoxicity by blocking granule exocytosis by mediating homophilic binding to adjacent cells, allowing interaction with and phosphorylation by LCK and interaction with the TCR/CD3 complex which recruits PTPN6 resulting in dephosphorylation of CD247 and ZAP70. Also inhibits T cell proliferation and cytokine production through inhibition of JNK cascade and plays a crucial role in regulating autoimmunity and anti-tumor immunity by inhibiting T cell through its interaction with HAVCR2. Upon natural killer (NK) cells activation, inhibit KLRK1-mediated cytolysis of CEACAM1-bearing tumor cells by trans-homophilic interactions with CEACAM1 on the target cell and lead to cis-interaction between CEACAM1 and KLRK1, allowing PTPN6 recruitment and then VAV1 dephosphorylation. Upon neutrophils activation negatively regulates IL1B production by recruiting PTPN6 to a SYK-TLR4-CEACAM1 complex, that dephosphorylates SYK, reducing the production of reactive oxygen species (ROS) and lysosome disruption, which in turn, reduces the activity of the inflammasome. Down-regulates neutrophil production by acting as a coinhibitory receptor for CSF3R by down-regulating the CSF3R-STAT3 pathway through recruitment of PTPN6 that dephosphorylates CSF3R. Also regulates insulin action by promoting INS clearance and regulating lipogenesis in liver through regulating insulin signaling. Upon INS stimulation, undergoes phosphorylation by INSR leading to INS clearance by increasing receptor-mediated insulin endocytosis. This inernalization promotes interaction with FASN leading to receptor-mediated insulin degradation and to reduction of FASN activity leading to negative regulation of fatty acid synthesis. INSR-mediated phosphorylation also provokes a down-regulation of cell proliferation through SHC1 interaction resulting in decrease coupling of SHC1 to the MAPK3/ERK1-MAPK1/ERK2 and phosphatidylinositol 3-kinase pathways. Functions as activator in angiogenesis by promoting blood vessel remodeling through endothelial cell differentiation and migration and in arteriogenesis by increasing the number of collateral arteries and collateral vessel calibers after ischemia. Also regulates vascular permeability through the VEGFR2 signaling pathway resulting in control of nitric oxide production. Down-regulates cell growth in response to EGF through its interaction with SHC1 that mediates interaction with EGFR resulting in decrease coupling of SHC1 to the MAPK3/ERK1-MAPK1/ERK2 pathway. Negatively regulates platelet aggregation by decreasing platelet adhesion on type I collagen through the GPVI-FcRgamma complex. Inhibits cell migration and cell scattering through interaction with FLNA; interferes with the interaction of FLNA with RALA. Mediates bile acid transport activity in a phosphorylation dependent manner. Negatively regulates osteoclastogenesis. In terms of biological role, cell adhesion protein that mediates homophilic cell adhesion in a calcium-independent manner. Promotes populations of T cells regulating IgA production and secretion associated with control of the commensal microbiota and resistance to enteropathogens. The chain is Cell adhesion molecule CEACAM1 from Homo sapiens (Human).